The following is a 130-amino-acid chain: Small ribosomal subunit protein uS8 (130 aa).

This sequence belongs to the universal ribosomal protein uS8 family. As to quaternary structure, part of the 30S ribosomal subunit. Contacts proteins S5 and S12.

In terms of biological role, one of the primary rRNA binding proteins, it binds directly to 16S rRNA central domain where it helps coordinate assembly of the platform of the 30S subunit. The chain is Small ribosomal subunit protein uS8 from Teredinibacter turnerae (strain ATCC 39867 / T7901).